The primary structure comprises 135 residues: Regulator of ribonuclease activity B (135 aa).

Residues 114–135 (WGTYFESDEDDEEDESEDKPEA) form a disordered region. A compositionally biased stretch (acidic residues) spans 119 to 135 (ESDEDDEEDESEDKPEA).

This sequence belongs to the RraB family. As to quaternary structure, interacts with the C-terminal region of Rne.

It localises to the cytoplasm. Its function is as follows. Globally modulates RNA abundance by binding to RNase E (Rne) and regulating its endonucleolytic activity. Can modulate Rne action in a substrate-dependent manner by altering the composition of the degradosome. This is Regulator of ribonuclease activity B from Photobacterium profundum (strain SS9).